The sequence spans 146 residues: uncharacterized protein (146 aa).

A Toprim domain is found at 31-119 (EKVMIVEGKS…RAYKEVAAAP (89 aa)).

This is an uncharacterized protein from Bacillus subtilis (strain 168).